Consider the following 436-residue polypeptide: L-threonine dehydratase biosynthetic IlvA (436 aa).

The catalytic stretch occupies residues Met-1–Val-357. Residue Lys-70 is modified to N6-(pyridoxal phosphate)lysine. Pyridoxal 5'-phosphate contacts are provided by residues Asn-97, Gly-203–Leu-207, and Ser-329. Positions His-353–Pro-427 constitute an ACT-like domain. The interval Asn-358–Thr-436 is regulatory.

The protein belongs to the serine/threonine dehydratase family. As to quaternary structure, homotetramer. Requires pyridoxal 5'-phosphate as cofactor.

It carries out the reaction L-threonine = 2-oxobutanoate + NH4(+). It participates in amino-acid biosynthesis; L-isoleucine biosynthesis; 2-oxobutanoate from L-threonine: step 1/1. Functionally, catalyzes the anaerobic formation of alpha-ketobutyrate and ammonia from threonine in a two-step reaction. The first step involved a dehydration of threonine and a production of enamine intermediates (aminocrotonate), which tautomerizes to its imine form (iminobutyrate). Both intermediates are unstable and short-lived. The second step is the nonenzymatic hydrolysis of the enamine/imine intermediates to form 2-ketobutyrate and free ammonia. In the low water environment of the cell, the second step is accelerated by RidA. The polypeptide is L-threonine dehydratase biosynthetic IlvA (ilvA) (Corynebacterium glutamicum (strain ATCC 13032 / DSM 20300 / JCM 1318 / BCRC 11384 / CCUG 27702 / LMG 3730 / NBRC 12168 / NCIMB 10025 / NRRL B-2784 / 534)).